A 200-amino-acid chain; its full sequence is TATA-box-binding protein (200 aa).

Repeat copies occupy residues 25-101 (LQNI…ARII) and 115-192 (IQNI…YPVL).

It belongs to the TBP family. Belongs to the TFIID complex together with the TBP-associated factors (TAFs). Binds DNA as monomer.

The protein localises to the nucleus. Functionally, general transcription factor that functions at the core of the DNA-binding multiprotein factor TFIID. Binding of TFIID to the TATA box is the initial transcriptional step of the pre-initiation complex (PIC), playing a role in the activation of eukaryotic genes transcribed by RNA polymerase II. This Mesembryanthemum crystallinum (Common ice plant) protein is TATA-box-binding protein.